Here is a 63-residue protein sequence, read N- to C-terminus: Large ribosomal subunit protein uL29 (63 aa).

It belongs to the universal ribosomal protein uL29 family.

The polypeptide is Large ribosomal subunit protein uL29 (Herminiimonas arsenicoxydans).